A 154-amino-acid polypeptide reads, in one-letter code: MRILGIDPGIARVGYGVIDTSNGQQQMLDCGIIRTNPGIDDGERMVEIASDLRQLIRRWKPQLAAVEKFFFYRSSTTISVVQARGVIIMTLARFRVPVMEFPPMQIKLALAGSGHAEKDEVLDAVMRELNLDQPPRPDDAADALAIALTGWFQR.

Catalysis depends on residues aspartate 7, glutamate 67, and aspartate 139. Residues aspartate 7, glutamate 67, and aspartate 139 each contribute to the Mg(2+) site.

Belongs to the RuvC family. As to quaternary structure, homodimer which binds Holliday junction (HJ) DNA. The HJ becomes 2-fold symmetrical on binding to RuvC with unstacked arms; it has a different conformation from HJ DNA in complex with RuvA. In the full resolvosome a probable DNA-RuvA(4)-RuvB(12)-RuvC(2) complex forms which resolves the HJ. It depends on Mg(2+) as a cofactor.

It is found in the cytoplasm. It catalyses the reaction Endonucleolytic cleavage at a junction such as a reciprocal single-stranded crossover between two homologous DNA duplexes (Holliday junction).. The RuvA-RuvB-RuvC complex processes Holliday junction (HJ) DNA during genetic recombination and DNA repair. Endonuclease that resolves HJ intermediates. Cleaves cruciform DNA by making single-stranded nicks across the HJ at symmetrical positions within the homologous arms, yielding a 5'-phosphate and a 3'-hydroxyl group; requires a central core of homology in the junction. The consensus cleavage sequence is 5'-(A/T)TT(C/G)-3'. Cleavage occurs on the 3'-side of the TT dinucleotide at the point of strand exchange. HJ branch migration catalyzed by RuvA-RuvB allows RuvC to scan DNA until it finds its consensus sequence, where it cleaves and resolves the cruciform DNA. This Prochlorococcus marinus (strain MIT 9313) protein is Crossover junction endodeoxyribonuclease RuvC.